The following is a 1305-amino-acid chain: MLQAQKQSDPILPWGASWAGRGQTLRARSTDSLDGPGEGSVQPVPTTGGPGTKGKPGKRLSAPRGPFPRLADCAHFHYENVDFGHIQLLLSPEREGPSLSGENELVFGVQVTCQGRSWPVLRSYDDFRSLDAHLHRCIFDRRFSCLPELPPPPEGTRAAQMLVPLLLQYLETLSGLVDSNLNCGPVLTWMELDNHGRRLLLSEEASLNIPAVAAAHVVKRYTAQAPDELSFEVGDIVSVIDMPPTEDRSWWRGKRGFQVGFFPSECVELFTERPGPGLKADADSPLCGIPAPQGISSLTSAVPRPRGKLAGLLRTFMRSRPSRQRLRQRGILRQRVFGCDLGEHLSNSGQDVPQVLRCCSEFIEAHGVVDGIYRLSGVSSNIQRLRHEFDSERIPELSGPAFLQDIHSVSSLCKLYFRELPNPLLTYQLYGKFSEAMSVPGEEERLVRVHDVIQQLPPPHYRTLEYLLRHLARMARHSANTSMHARNLAIVWAPNLLRSMELESVGLGGAAAFREVRVQSVVVEFLLTHVEVLFSDTFTSAGLDPAGRCLLPRPKSLAGSSPSTRLLTLEEAQARTQGRLGTPTEPTTPKTPASPVERRKRERAEKQRKPGGSSWKTFFALGRGPSIPRKKPLPWLGGSRAPPQPSGSRPDTVTLRSAKSEESLSSQASGAGLQRLHRLRRPHSSSDAFPVGPAPAGSCESLSSSSSSSSSSSSSSSSESSAGGLGPLSGSPSHRTSAWLDDGDDLDFSPPRCLEGLRGLDFDPLTFRCSSPTPGDPAPPASPAPPASASAFPPRATPQALSPHGPTKPASPTALDISEPLAVSVPPAVLELLGAGGTPASATPTPALSPHLIPLLLRGAEAQLSDTCQQEISSKLAPTRGAPGQQSPGGMDSPLLPPPLPLLRPGGAPPPPPKNPARLMALALAERAQQVAEQQSQQEQGGTPPAPHSPFRRSLSLEVGGEPVGTSGSGIHPPSLAHPGAWAPGPPPYLPRQQSDGSLVRSQRPLGTSRRSPRGPSQVSAHLRASGAYRDAPEMAAQSPCSVPSQGSNPSFFSTPRECLPPFLGVPKQGLYSLGPPSFPPSSPAPVWRNSLGAPSALDRGENLYYEIGVGEGTSYSGPSRSWSPFRSMPPDRHNASYGMLGQSPPLHRSPDFLLSYPPPPSCFPPEHLTHSVSQRLARRPTRPEPLYVNLALGPRGPSPASSSSSSPPAHPRSRSDPGPPVPRLPQKQRAPWGPHTPHRVPGPWGSPEPFLLYRPAPPSYGRGGEVRGSLYRNGGHRGEGAGPPPPYPTPSWSLHSEGQTRSYC.

The interval 1–64 (MLQAQKQSDP…KPGKRLSAPR (64 aa)) is disordered. The residue at position 32 (Ser32) is a Phosphoserine. Positions 83–192 (FGHIQLLLSP…CGPVLTWMEL (110 aa)) constitute a PX; atypical domain. In terms of domain architecture, SH3 spans 210–272 (PAVAAAHVVK…PSECVELFTE (63 aa)). The Rho-GAP domain occupies 339 to 534 (CDLGEHLSNS…FLLTHVEVLF (196 aa)). 3 disordered regions span residues 575 to 818 (RTQG…LDIS), 864 to 1054 (LSDT…SFFS), and 1115 to 1305 (SYSG…RSYC). The span at 582 to 595 (TPTEPTTPKTPASP) shows a compositional bias: low complexity. Residue Ser594 is modified to Phosphoserine. Residues 596–608 (VERRKRERAEKQR) show a composition bias toward basic and acidic residues. Residues 646–669 (SGSRPDTVTLRSAKSEESLSSQAS) show a composition bias toward polar residues. At Ser660 the chain carries Phosphoserine. The segment covering 694-733 (APAGSCESLSSSSSSSSSSSSSSSSESSAGGLGPLSGSPS) has biased composition (low complexity). Phosphoserine is present on Ser749. The span at 774–786 (PGDPAPPASPAPP) shows a compositional bias: pro residues. Residues 787–798 (ASASAFPPRATP) show a composition bias toward low complexity. The segment covering 864–873 (LSDTCQQEIS) has biased composition (polar residues). Positions 895-915 (LLPPPLPLLRPGGAPPPPPKN) are enriched in pro residues. Positions 916–940 (PARLMALALAERAQQVAEQQSQQEQ) are enriched in low complexity. Polar residues-rich tracts occupy residues 992–1020 (RQQSDGSLVRSQRPLGTSRRSPRGPSQVS), 1039–1054 (SPCSVPSQGSNPSFFS), and 1115–1125 (SYSGPSRSWSP). The residue at position 1188 (Tyr1188) is a Phosphotyrosine. Residues 1194 to 1208 (GPRGPSPASSSSSSP) show a composition bias toward low complexity. Arg1263 is modified (omega-N-methylarginine). A compositionally biased stretch (polar residues) spans 1292–1305 (SWSLHSEGQTRSYC).

Belongs to the PX domain-containing GAP family. Specifically interacts with CDC42 and RHOQ/TC10 through its Rho-GAP domain. Interacts with NEK6. In terms of tissue distribution, highly expressed in brain and testis. Also expressed in white adipose tissue (WAT) and muscle at a low level.

Its subcellular location is the cell membrane. Functionally, may be involved in several stages of intracellular trafficking. Could play an important role in the regulation of glucose transport by insulin. May act as a downstream effector of RHOQ/TC10 in the regulation of insulin-stimulated glucose transport. The chain is Rho GTPase-activating protein 33 (Arhgap33) from Mus musculus (Mouse).